An 824-amino-acid polypeptide reads, in one-letter code: Glycophorin-binding protein 130 (824 aa).

Residues 84–88 (RILAE) carry the PEXEL motif motif. Disordered stretches follow at residues 97-236 (EKTT…GQIM), 258-291 (NTDP…EYAS), 310-334 (DPND…PEGQ), 358-384 (NTDP…PEGQ), 408-431 (NTDP…SDPE), 457-482 (NTDP…DPEG), 507-532 (NTDP…DPEG), 559-582 (DPND…DPEG), 659-683 (DPND…PEGQ), 711-733 (NDEV…PEGQ), and 759-783 (DPND…PEGQ). Basic and acidic residues-rich tracts occupy residues 117-140 (TKKD…SEKQ) and 174-198 (KKEE…EPKA). Polar residues predominate over residues 200–228 (KVSQKPSTSTRSNNEVKIRAASNQETLTS). GBP repeat units lie at residues 226–275 (LTSA…NKED), 276–325 (LTSA…NKED), 326–375 (LTSA…NKED), 376–424 (LTSA…DNKE), 425–474 (LTSS…NKED), 475–524 (LTSA…NKED), 525–574 (LTSA…NKED), 575–624 (LTSA…NKEE), 625–674 (LTSS…NKED), 675–724 (LTSA…NKED), 725–774 (LTSA…NKED), and 775–824 (LTSA…NNEA). 10 stretches are compositionally biased toward basic and acidic residues: residues 264-276 (EVER…KEDL), 314-326 (DVER…KEDL), 364-376 (EVER…KEDL), 414-426 (EVER…KELT), 463-475 (EVER…KEDL), 513-525 (EVER…KEDL), 563-575 (EVER…KEDL), 663-675 (EVER…KEDL), 713-725 (EVER…KEDL), and 763-775 (DVER…KEDL).

Interacts with host glycophorin.

It localises to the secreted. Its subcellular location is the cell surface. The protein localises to the host cytoplasm. Involved in merozoite invasion of host erythrocytes. The chain is Glycophorin-binding protein 130 from Plasmodium falciparum (isolate 3D7).